The primary structure comprises 686 residues: Rhophilin-2 (686 aa).

The REM-1 domain maps to 26–100 (NPLAQTGRSK…LEGLNISVGV (75 aa)). Residues 46 to 66 (QILKAMRMRTGAENLLKAATN) form an interaction with Rho region. A BRO1 domain is found at 111–460 (PLIPLGLKET…QLKYTQLRED (350 aa)). The 79-residue stretch at 515-593 (RSIHFTAEEG…DDIEMKVVSL (79 aa)) folds into the PDZ domain. A Phosphothreonine modification is found at threonine 655.

This sequence belongs to the RHPN family. In terms of assembly, interacts with GTP-bound RhoA and RhoB. Interacts with both GTP- and GDP-bound RhoA. Interacts with KRT18.

It localises to the cytoplasm. It is found in the perinuclear region. Binds specifically to GTP-Rho. May function in a Rho pathway to limit stress fiber formation and/or increase the turnover of F-actin structures in the absence of high levels of RhoA activity. The chain is Rhophilin-2 (RHPN2) from Bos taurus (Bovine).